We begin with the raw amino-acid sequence, 315 residues long: Putative peptide transport system permease protein BMEII0209 (315 aa).

The next 6 membrane-spanning stretches (helical) occupy residues 13–33 (AIPV…LLPG), 102–122 (LALL…VVAA), 136–156 (LALL…VILF), 178–198 (WLRS…GYLA), 238–258 (VSVL…SVVI), and 287–307 (MLFL…LYTI). One can recognise an ABC transmembrane type-1 domain in the interval 96–305 (LPVTISLALL…AINVLVDILY (210 aa)).

This sequence belongs to the binding-protein-dependent transport system permease family. In terms of assembly, the complex is composed of two ATP-binding proteins (BMEII0205 and BMEII0206), two transmembrane proteins (BMEII0207/BMEII0208 and BMEII0209) and a solute-binding protein (BMEII0210).

Its subcellular location is the cell inner membrane. Functionally, probably part of an ABC transporter complex that could be involved in peptide import. Probably responsible for the translocation of the substrate across the membrane. This Brucella melitensis biotype 1 (strain ATCC 23456 / CCUG 17765 / NCTC 10094 / 16M) protein is Putative peptide transport system permease protein BMEII0209.